The chain runs to 157 residues: Ribosomal RNA large subunit methyltransferase H (157 aa).

S-adenosyl-L-methionine is bound by residues L74, G106, and 125–130 (LGNITF).

Belongs to the RNA methyltransferase RlmH family. As to quaternary structure, homodimer.

The protein localises to the cytoplasm. It catalyses the reaction pseudouridine(1915) in 23S rRNA + S-adenosyl-L-methionine = N(3)-methylpseudouridine(1915) in 23S rRNA + S-adenosyl-L-homocysteine + H(+). Its function is as follows. Specifically methylates the pseudouridine at position 1915 (m3Psi1915) in 23S rRNA. The polypeptide is Ribosomal RNA large subunit methyltransferase H (Lawsonia intracellularis (strain PHE/MN1-00)).